Consider the following 296-residue polypeptide: tRNA dimethylallyltransferase (296 aa).

Residue 2 to 9 (GPTASGKT) participates in ATP binding. 4-9 (TASGKT) is a substrate binding site. Interaction with substrate tRNA stretches follow at residues 27–30 (DSAL), 151–155 (QRLSR), and 232–237 (RCVGYR).

The protein belongs to the IPP transferase family. As to quaternary structure, monomer. Mg(2+) serves as cofactor.

The catalysed reaction is adenosine(37) in tRNA + dimethylallyl diphosphate = N(6)-dimethylallyladenosine(37) in tRNA + diphosphate. Catalyzes the transfer of a dimethylallyl group onto the adenine at position 37 in tRNAs that read codons beginning with uridine, leading to the formation of N6-(dimethylallyl)adenosine (i(6)A). This Shewanella baltica (strain OS155 / ATCC BAA-1091) protein is tRNA dimethylallyltransferase.